The chain runs to 160 residues: CXXC motif containing zinc binding protein (160 aa).

C33, C36, C67, and C70 together coordinate Zn(2+). Position 75 is a phosphoserine (S75).

It belongs to the UPF0587 family. Monomer.

In Homo sapiens (Human), this protein is CXXC motif containing zinc binding protein.